We begin with the raw amino-acid sequence, 281 residues long: DSC E3 ubiquitin ligase complex subunit 4 (281 aa).

Helical transmembrane passes span 22–42, 62–82, 84–104, and 115–135; these read LCYA…LLLL, LPLF…RMFF, LPTA…INFI, and FITS…ILIA. Positions 145–154 are enriched in polar residues; it reads HIQASQSGLS. Disordered regions lie at residues 145–183 and 256–281; these read HIQA…EDLQ and NTNS…TNPI. A compositionally biased stretch (acidic residues) spans 157-167; that stretch reads DGDEEPSDLIT. A compositionally biased stretch (basic and acidic residues) spans 168–183; that stretch reads EDSRDTQQGQRQEDLQ.

In terms of assembly, component of the DSC E3 ubiquitin ligase complex composed of dsc1, dsc2, dsc3 and dsc4.

Its subcellular location is the endoplasmic reticulum membrane. It localises to the golgi apparatus membrane. The protein operates within protein modification; protein ubiquitination. In terms of biological role, component of the DSC E3 ubiquitin ligase complex which is required for the sre1 transcriptional activator proteolytic cleavage to release the soluble transcription factor from the membrane in low oxygen or sterol conditions. The complex also plays an important role in the multivesicular body (MVB) pathway and functions in a post-endoplasmic reticulum pathway for protein degradation. In Schizosaccharomyces pombe (strain 972 / ATCC 24843) (Fission yeast), this protein is DSC E3 ubiquitin ligase complex subunit 4 (dsc4).